A 449-amino-acid polypeptide reads, in one-letter code: Trigger factor (449 aa).

One can recognise a PPIase FKBP-type domain in the interval glycine 162–proline 247. Residues alanine 427–lysine 438 show a composition bias toward basic residues. The interval alanine 427 to lysine 449 is disordered. A compositionally biased stretch (basic and acidic residues) spans serine 439–lysine 449.

The protein belongs to the FKBP-type PPIase family. Tig subfamily.

It is found in the cytoplasm. It catalyses the reaction [protein]-peptidylproline (omega=180) = [protein]-peptidylproline (omega=0). Its function is as follows. Involved in protein export. Acts as a chaperone by maintaining the newly synthesized protein in an open conformation. Functions as a peptidyl-prolyl cis-trans isomerase. The protein is Trigger factor of Lactobacillus gasseri (strain ATCC 33323 / DSM 20243 / BCRC 14619 / CIP 102991 / JCM 1131 / KCTC 3163 / NCIMB 11718 / NCTC 13722 / AM63).